The primary structure comprises 677 residues: Polyunsaturated fatty acid lipoxygenase ALOX15B (677 aa).

A PLAT domain is found at 2-125 (AKFRVRVSTG…ELVLREGAAK (124 aa)). Gly-15, Gly-17, Asp-39, His-40, Gly-42, Glu-44, Asp-86, and Ala-87 together coordinate Ca(2+). The Lipoxygenase domain occupies 126 to 677 (VSWQDHHRTL…PPLIENSVSI (552 aa)). Fe cation-binding residues include His-374, His-379, His-554, and Ile-677.

Belongs to the lipoxygenase family. Fe cation serves as cofactor.

It localises to the cytoplasm. The protein resides in the cytosol. It is found in the cell membrane. Its subcellular location is the cytoskeleton. The protein localises to the membrane. It localises to the cell junction. The protein resides in the adherens junction. It is found in the focal adhesion. Its subcellular location is the nucleus. The catalysed reaction is (5Z,8Z,11Z,14Z)-eicosatetraenoate + O2 = (15S)-hydroperoxy-(5Z,8Z,11Z,13E)-eicosatetraenoate. The enzyme catalyses (9Z,12Z)-octadecadienoate + O2 = 13-hydroperoxy-(9Z,11E)-octadecadienoate. It catalyses the reaction (5S)-hydroxy-(6E,8Z,11Z,14Z)-eicosatetraenoate + O2 = (5S)-hydroxy-(15S)-hydroperoxy-(6E,8Z,11Z,13E)-eicosatetraenoate. It carries out the reaction (5Z,8Z,11Z,14Z)-eicosatetraenoate + O2 = 5-hydroperoxy-(6E,8Z,11Z,14Z)-eicosatetraenoate. The catalysed reaction is (5S,6R)-dihydroxy-(7E,9E,11Z,14Z)-eicosatetraenoate + O2 = (5S,6R)-dihydroxy-(15S)-hydroperoxy-(7E,9E,11Z,13E)-eicosatetraenoate. The enzyme catalyses (5S)-hydroperoxy-(6E,8Z,11Z,14Z)-eicosatetraenoate + O2 = (5S,15S)-dihydroperoxy-(6E,8Z,11Z,13E)-eicosatetraenoate. It catalyses the reaction 2-(5Z,8Z,11Z,14Z-eicosatetraenoyl)-glycerol + O2 = 2-[15(S)-hydroperoxy-(5Z,8Z,11Z,13E)-eicosatetraenoyl]-glycerol. It carries out the reaction (8S)-hydroperoxy-(5Z,9E,11Z,14Z)-eicosatetraenoate + O2 = (8S,15S)-dihydroperoxy-(5Z,9E,11Z,13E)-eicosatetraenoate. The catalysed reaction is N-(5Z,8Z,11Z,14Z)-eicosatetraenoyl-L-alanine + O2 = N-(15S)-hydroperoxy-(5Z,8Z,11Z,13E)-eicosatetraenoyl-alanine. The enzyme catalyses N-(5Z,8Z,11Z,14Z)-eicosatetraenoyl-gamma-aminobutanoate + O2 = N-(15S)-hydroperoxy-(5Z,8Z,11Z,13E)-eicosatetraenoyl-gamma-aminobutanoate. It catalyses the reaction N-(5Z,8Z,11Z,14Z)-eicosatetraenoyl-glycine + O2 = N-(15S)-hydroperoxy-(5Z,8Z,11Z,13E)-eicosatetraenoyl-glycine. It carries out the reaction N-(5Z,8Z,11Z,14Z)-eicosatetraenoyl-taurine + O2 = N-(15S)-hydroperoxy-(5Z,8Z,11Z,13E)-eicosatetraenoyl-taurine. The catalysed reaction is 2-(5Z,8Z,11Z,14Z-eicosatetraenoyl)-glycerol + O2 = 2-[12-hydroperoxy-(5Z,8Z,10E,14Z)-eicosatetraenoyl]-glycerol. The enzyme catalyses 1-octadecanoyl-2-(5Z,8Z,11Z,14Z-eicosatetraenoyl)-sn-glycero-3-phosphocholine + O2 = 1-octadecanoyl-2-(15-hydroperoxy-5Z,8Z,11Z,13E-eicosatetraenoyl)-sn-glycero-3-phosphocholine. It catalyses the reaction a 1-acyl-2-(5Z,8Z,11Z,14Z-eicosatetraenoyl)-sn-glycero-3-phospho-(1D-myo-inositol) + O2 = a 1-acyl-2-(15-hydroperoxy-5Z,8Z,11Z,13E-eicosatetraenoyl)-sn-glycero-3-phospho-(1D-myo-inositol). It carries out the reaction a 1-acyl-2-(8Z,11Z,14Z-eicosatrienoyl)-sn-glycero-3-phospho-(1D-myo-inositol) + O2 = a 1-acyl-2-(15-hydroperoxy-8Z,11Z,13E-eicosatrienoyl)-sn-glycero-3-phospho-(1D-myo-inositol). The catalysed reaction is 1-octadecanoyl-2-(5Z,8Z,11Z,14Z)-eicosatetraenoyl-sn-glycero-3-phosphoethanolamine + O2 = 1-octadecanoyl-2-(15-hydroperoxy-5Z,8Z,11Z,13E-eicosatetraenoyl)-sn-glycero-3-phosphoethanolamine. The enzyme catalyses 1-octadecanoyl-2-(5Z,8Z,11Z,14Z-eicosatetraenoyl)-sn-glycero-3-phospho-(1D-myo-inositol) + O2 = 1-octadecanoyl-2-(15-hydroperoxy-5Z,8Z,11Z,13E-eicosatetraenoyl)-sn-glycero-3-phospho-(1D-myo-inositol). It catalyses the reaction (8Z,11Z,14Z)-eicosatrienoate + O2 = 15-hydroperoxy-(8Z,11Z,13E)-eicosatrienoate. It carries out the reaction (7S)-hydroperoxy-(4Z,8E,10Z,13Z,16Z,19Z)-docosahexaenoate + O2 = (7S,17S)-dihydroperoxy-(4Z,8E,10Z,13Z,15E,19Z)-docosahexaenoate. It participates in lipid metabolism; hydroperoxy eicosatetraenoic acid biosynthesis. In terms of biological role, non-heme iron-containing dioxygenase that catalyzes the stereo-specific peroxidation of free and esterified polyunsaturated fatty acids (PUFAs) generating a spectrum of bioactive lipid mediators. Inserts a peroxyl group at C15 of arachidonate ((5Z,8Z,11Z,14Z)-eicosatetraenoate) producing (15S)-hydroperoxyeicosatetraenoate/(15S)-HPETE. Also peroxidizes linoleate ((9Z,12Z)-octadecadienoate) to 13-hydroperoxyoctadecadienoate/13-HPODE. Oxygenates arachidonyl derivatives such as 2-arachidonoylglycerol (2-AG) leading to the production and extracellular release of 15-hydroxyeicosatetraenoyl glycerol (15-HETE-G) that acts as a peroxisome proliferator-activated receptor alpha agonist. Has the ability to efficiently class-switch ALOX5 pro-inflammatory mediators into anti-inflammatory intermediates. Participates in the sequential oxidations of DHA ((4Z,7Z,10Z,13Z,16Z,19Z)-docosahexaenoate) to generate specialized pro-resolving mediators (SPMs) resolvin D5 ((7S,17S)-diHPDHA), which can actively down-regulate the immune response and have anti-aggregation properties with platelets. In addition to free PUFAs hydrolyzed from phospholipids, it directly oxidizes PUFAs esterified to membrane-bound phospholipids. Has no detectable 8S-lipoxygenase activity on arachidonate but reacts with (8S)-HPETE to produce (8S,15S)-diHPETE. May regulate progression through the cell cycle and cell proliferation. May also regulate cytokine secretion by macrophages and therefore play a role in the immune response. May also regulate macrophage differentiation into proatherogenic foam cells. The sequence is that of Polyunsaturated fatty acid lipoxygenase ALOX15B from Rattus norvegicus (Rat).